A 44-amino-acid polypeptide reads, in one-letter code: Large ribosomal subunit protein P2 (44 aa).

Position 1 is an N-acetylmethionine (methionine 1). Phosphoserine is present on residues serine 17 and serine 19. N6-acetyllysine; alternate is present on lysine 21. N6-succinyllysine; alternate is present on lysine 21.

It belongs to the eukaryotic ribosomal protein P1/P2 family. As to quaternary structure, heterodimer with RPLP1 at the lateral ribosomal stalk of the large ribosomal subunit. In terms of processing, phosphorylated.

In terms of biological role, plays an important role in the elongation step of protein synthesis. The polypeptide is Large ribosomal subunit protein P2 (RPLP2) (Oryctolagus cuniculus (Rabbit)).